Consider the following 352-residue polypeptide: Speedy protein E16 (352 aa).

The tract at residues 1-90 (MDRTETRFRK…EPEKELAPEP (90 aa)) is disordered. A compositionally biased stretch (polar residues) spans 18–40 (ITTSRQPHPQNEQSPQRSTSGYS). The segment covering 76–90 (DESEEEPEKELAPEP) has biased composition (acidic residues).

It belongs to the Speedy/Ringo family.

The chain is Speedy protein E16 from Homo sapiens (Human).